We begin with the raw amino-acid sequence, 454 residues long: ADP-specific phosphofructokinase (454 aa).

An ADPK domain is found at 1–452; sequence MIDEVRELGI…FLSYLSLLRR (452 aa). Glu263, Glu293, and Asp436 together coordinate Mg(2+). Catalysis depends on Asp436, which acts as the Proton acceptor.

The protein belongs to the carbohydrate kinase PfkC family. Homotetramer. Mg(2+) is required as a cofactor.

It localises to the cytoplasm. It carries out the reaction beta-D-fructose 6-phosphate + ADP = beta-D-fructose 1,6-bisphosphate + AMP + H(+). Its pathway is carbohydrate degradation; glycolysis. Its activity is regulated as follows. Inhibited by AMP and ATP. Functionally, catalyzes the phosphorylation of fructose 6-phosphate to fructose 1,6-bisphosphate using ADP as the phosphate donor. As a phosphoryl group donor, ADP can be replaced by GDP, ATP, and GTP to a limited extent. The protein is ADP-specific phosphofructokinase (pfkC) of Pyrococcus furiosus (strain ATCC 43587 / DSM 3638 / JCM 8422 / Vc1).